A 347-amino-acid chain; its full sequence is MIPATYTLSQITARLGGEWRGEDTSVTAVRPLADAQAEHISFLANPKYKAEVHDSSAGAVIVSAKAADGFEGRNLIVADDPYLYFAKVARLFSPVVKARGGIHPTAVVEESATVPASCEIGANAYIGANTVLGEGCRILANAVVQHDCRLGDEVVLHPNAVVYYGCTLGRRVEIHSGAVIGADGFGLAFAGDSWFKIPQTGAVTLGDDVEIGSNTNIDRGAMSDTTVGNGTKIDNQVQIGHNCKIGSHTVIAAKTGISGSVTIGSYCIIGGGVGTVGHIEIADKTTIGGGTSVTHSITESGKHLAGIFPMSTHKEWARNAVYIHRLSEMNKRLKTLEQQLSDGKDTQ.

Catalysis depends on His-241, which acts as the Proton acceptor.

It belongs to the transferase hexapeptide repeat family. LpxD subfamily. Homotrimer.

The enzyme catalyses a UDP-3-O-[(3R)-3-hydroxyacyl]-alpha-D-glucosamine + a (3R)-hydroxyacyl-[ACP] = a UDP-2-N,3-O-bis[(3R)-3-hydroxyacyl]-alpha-D-glucosamine + holo-[ACP] + H(+). It participates in bacterial outer membrane biogenesis; LPS lipid A biosynthesis. Functionally, catalyzes the N-acylation of UDP-3-O-acylglucosamine using 3-hydroxyacyl-ACP as the acyl donor. Is involved in the biosynthesis of lipid A, a phosphorylated glycolipid that anchors the lipopolysaccharide to the outer membrane of the cell. This is UDP-3-O-acylglucosamine N-acyltransferase from Neisseria meningitidis serogroup A / serotype 4A (strain DSM 15465 / Z2491).